A 416-amino-acid chain; its full sequence is Pentraxin fusion protein (416 aa).

A signal peptide spans 1-14; the sequence is MKSLLLFLKSQVFG. N129 is a glycosylation site (N-linked (GlcNAc...) asparagine). Residues 184–206 form a disordered region; it reads GTEASDSSESVDGTEAPASPESD. The Pentraxin (PTX) domain maps to 220–416; that stretch reads TNKSFMFPKE…YSMIGNVAEV (197 aa). Residue N221 is glycosylated (N-linked (GlcNAc...) asparagine). A disulfide bridge connects residues C251 and C311. Residues D275, Q353, D354, and Q364 each contribute to the Ca(2+) site.

Ca(2+) is required as a cofactor.

The chain is Pentraxin fusion protein (pxn1) from Xenopus laevis (African clawed frog).